A 140-amino-acid polypeptide reads, in one-letter code: Profilin (140 aa).

S2 is subject to N-acetylserine.

Belongs to the profilin family. In terms of assembly, occurs in many kinds of cells as a complex with monomeric actin in a 1:1 ratio.

The protein localises to the cytoplasm. It localises to the cytoskeleton. Functionally, binds to actin and affects the structure of the cytoskeleton. At high concentrations, profilin prevents the polymerization of actin, whereas it enhances it at low concentrations. By binding to PIP2, it inhibits the formation of IP3 and DG. This Heliocidaris crassispina (Sea urchin) protein is Profilin.